A 443-amino-acid polypeptide reads, in one-letter code: uncharacterized protein (443 aa).

Transmembrane regions (helical) follow at residues 15-35 (IYAG…DGLA), 38-58 (LGMA…GPGS), 59-79 (AWQG…LSWL), and 181-201 (VVTA…IPAL). Residues 231–270 (NFGIGNIGNANLGNGNIGNANLGSGNAGFFNFGNGNDGNT) form a 4 X 10 AA approximate repeats region.

This sequence belongs to the mycobacterial PPE family.

The protein resides in the cell membrane. This is an uncharacterized protein from Mycobacterium tuberculosis (strain ATCC 25618 / H37Rv).